Reading from the N-terminus, the 453-residue chain is tRNA modification GTPase MnmE (453 aa).

(6S)-5-formyl-5,6,7,8-tetrahydrofolate contacts are provided by arginine 22, glutamate 79, and lysine 119. In terms of domain architecture, TrmE-type G spans 215–376; it reads GMKVVIAGRP…LKQHLKSLMG (162 aa). Asparagine 225 serves as a coordination point for K(+). GTP is bound by residues 225-230, 244-250, 269-272, and 334-337; these read NAGKSS, TEIAGTT, DTAG, and NKAD. A Mg(2+)-binding site is contributed by serine 229. 3 residues coordinate K(+): threonine 244, isoleucine 246, and threonine 249. Threonine 250 is a binding site for Mg(2+). Residue lysine 453 coordinates (6S)-5-formyl-5,6,7,8-tetrahydrofolate.

It belongs to the TRAFAC class TrmE-Era-EngA-EngB-Septin-like GTPase superfamily. TrmE GTPase family. As to quaternary structure, homodimer. Heterotetramer of two MnmE and two MnmG subunits. It depends on K(+) as a cofactor.

It is found in the cytoplasm. Its function is as follows. Exhibits a very high intrinsic GTPase hydrolysis rate. Involved in the addition of a carboxymethylaminomethyl (cmnm) group at the wobble position (U34) of certain tRNAs, forming tRNA-cmnm(5)s(2)U34. The protein is tRNA modification GTPase MnmE of Shewanella denitrificans (strain OS217 / ATCC BAA-1090 / DSM 15013).